The sequence spans 312 residues: Thioredoxin reductase (312 aa).

Residue Glu-33 to Gln-43 participates in FAD binding. Cys-138 and Cys-141 are oxidised to a cystine. Asp-283 to Ala-292 lines the FAD pocket.

This sequence belongs to the class-II pyridine nucleotide-disulfide oxidoreductase family. Homodimer. Requires FAD as cofactor.

It is found in the cytoplasm. The catalysed reaction is [thioredoxin]-dithiol + NADP(+) = [thioredoxin]-disulfide + NADPH + H(+). The chain is Thioredoxin reductase (trxB) from Chlamydia trachomatis serovar D (strain ATCC VR-885 / DSM 19411 / UW-3/Cx).